The following is a 61-amino-acid chain: Small ribosomal subunit protein uS14 (61 aa).

The Zn(2+) site is built by cysteine 24, cysteine 27, cysteine 40, and cysteine 43.

The protein belongs to the universal ribosomal protein uS14 family. Zinc-binding uS14 subfamily. Part of the 30S ribosomal subunit. Contacts proteins S3 and S10. Zn(2+) serves as cofactor.

Binds 16S rRNA, required for the assembly of 30S particles and may also be responsible for determining the conformation of the 16S rRNA at the A site. The protein is Small ribosomal subunit protein uS14 of Streptococcus pyogenes serotype M49 (strain NZ131).